The primary structure comprises 378 residues: Sphingosine 1-phosphate receptor 3 (378 aa).

Topologically, residues 1 to 44 (MATTHAQGHQPVLGNDTLREHYDYVGKLAGRLRDPPEGGTLITT) are extracellular. The N-linked (GlcNAc...) asparagine glycan is linked to Asn15. Residues 45–65 (ILFLVTCSFIVLENLMVLIAI) form a helical membrane-spanning segment. At 66–74 (WKNNKFHNR) the chain is on the cytoplasmic side. A helical membrane pass occupies residues 75-95 (MYFFIGNLALCDLLAGIAYKV). Residues 96 to 115 (NILMSGRKTFSLSPTVWFLR) lie on the Extracellular side of the membrane. A helical membrane pass occupies residues 116-136 (EGSMFVALGASTCSLLAIAIE). The Cytoplasmic portion of the chain corresponds to 137 to 154 (RHLTMIKMRPYDANKKHR). Residues 155-175 (VFLLIGMCWLIAFSLGALPIL) traverse the membrane as a helical segment. At 176–196 (GWNCLENFPDCSTILPLYSKK) the chain is on the extracellular side. The chain crosses the membrane as a helical span at residues 197–217 (YIAFLISIFTAILVTIVILYA). At 218–244 (RIYCLVKSSSRRVANHNSERSMALLRT) the chain is on the cytoplasmic side. Residues 245-265 (VVIVVSVFIACWSPLFILFLI) form a helical membrane-spanning segment. Over 266 to 281 (DVACRAKECSILFKSQ) the chain is Extracellular. The helical transmembrane segment at 282–302 (WFIMLAVLNSAMNPVIYTLAS) threads the bilayer. Topologically, residues 303–378 (KEMRRAFFRL…RSFQNGVLCK (76 aa)) are cytoplasmic. The segment at 323–354 (TQASPMQPALDPSRSKSSSSNNSSHSPKVKED) is disordered. At Ser326 the chain carries Phosphoserine. Residues 337–348 (SKSSSSNNSSHS) show a composition bias toward low complexity.

It belongs to the G-protein coupled receptor 1 family. As to expression, most abundant in heart, lung, kidney and spleen; low but detectable in brain, thymus, muscle and testis; and nearly undetectable in liver, stomach, and intestine. Expressed in embryonic lung from embryonic day 14-18. Also abundantly detected in embryonic nasal cartilage, sphenoid bone, vena cava, Meckel's cartilage/incisor teeth, genital tubercle and bladder.

The protein localises to the cell membrane. Functionally, receptor for the lysosphingolipid sphingosine 1-phosphate (S1P). S1P is a bioactive lysophospholipid that elicits diverse physiological effect on most types of cells and tissues. In Mus musculus (Mouse), this protein is Sphingosine 1-phosphate receptor 3 (S1pr3).